We begin with the raw amino-acid sequence, 102 residues long: Large ribosomal subunit protein bL21 (102 aa).

The protein belongs to the bacterial ribosomal protein bL21 family. Part of the 50S ribosomal subunit. Contacts protein L20.

This protein binds to 23S rRNA in the presence of protein L20. The protein is Large ribosomal subunit protein bL21 of Clavibacter sepedonicus (Clavibacter michiganensis subsp. sepedonicus).